Reading from the N-terminus, the 468-residue chain is RuvB-like helicase 2 (468 aa).

ATP is bound at residue 76-83 (GPPSTGKT).

Belongs to the RuvB family. May form heterododecamers with RVB1. Component of the SWR1 chromatin remodeling complex, the INO80 chromatin remodeling complex, and of the R2TP complex.

The protein localises to the nucleus. It catalyses the reaction ATP + H2O = ADP + phosphate + H(+). Its function is as follows. DNA helicase which participates in several chromatin remodeling complexes, including the SWR1 and the INO80 complexes. The SWR1 complex mediates the ATP-dependent exchange of histone H2A for the H2A variant HZT1 leading to transcriptional regulation of selected genes by chromatin remodeling. The INO80 complex remodels chromatin by shifting nucleosomes and is involved in DNA repair. Also involved in pre-rRNA processing. The sequence is that of RuvB-like helicase 2 (rvb2) from Emericella nidulans (strain FGSC A4 / ATCC 38163 / CBS 112.46 / NRRL 194 / M139) (Aspergillus nidulans).